The chain runs to 135 residues: L-ectoine synthase (135 aa).

Belongs to the ectoine synthase family.

It catalyses the reaction (2S)-4-acetamido-2-aminobutanoate = L-ectoine + H2O. The protein operates within amine and polyamine biosynthesis; ectoine biosynthesis; L-ectoine from L-aspartate 4-semialdehyde: step 3/3. In terms of biological role, catalyzes the circularization of gamma-N-acetyl-alpha,gamma-diaminobutyric acid (ADABA) to ectoine (1,4,5,6-tetrahydro-2-methyl-4-pyrimidine carboxylic acid), which is an excellent osmoprotectant. In Hyphomonas neptunium (strain ATCC 15444), this protein is L-ectoine synthase.